We begin with the raw amino-acid sequence, 356 residues long: S-adenosylmethionine:tRNA ribosyltransferase-isomerase (356 aa).

This sequence belongs to the QueA family. As to quaternary structure, monomer.

It is found in the cytoplasm. The catalysed reaction is 7-aminomethyl-7-carbaguanosine(34) in tRNA + S-adenosyl-L-methionine = epoxyqueuosine(34) in tRNA + adenine + L-methionine + 2 H(+). It participates in tRNA modification; tRNA-queuosine biosynthesis. In terms of biological role, transfers and isomerizes the ribose moiety from AdoMet to the 7-aminomethyl group of 7-deazaguanine (preQ1-tRNA) to give epoxyqueuosine (oQ-tRNA). In Escherichia coli O8 (strain IAI1), this protein is S-adenosylmethionine:tRNA ribosyltransferase-isomerase.